The primary structure comprises 750 residues: Methylmalonyl-CoA mutase, mitochondrial (750 aa).

The N-terminal 32 residues, 1–32 (MLRAKNQLFLLSPHYLKQVKESSGSRLIQQRL), are a transit peptide targeting the mitochondrion. Residue Q50 participates in malonyl-CoA binding. The residue at position 89 (K89) is an N6-acetyllysine. Residues 96-99 (YPTM) and 106-110 (TIRQY) each bind malonyl-CoA. K212 bears the N6-acetyllysine mark. Malonyl-CoA-binding positions include 216–218 (TIQ), R228, K255, H265, and 304–306 (RLS). Residue K335 is modified to N6-acetyllysine. K343 is subject to N6-succinyllysine. Position 481 is a phosphoserine (S481). K595 carries the N6-succinyllysine modification. The residue at position 602 (K602) is an N6-acetyllysine. Residues 614 to 746 (RPRLLVAKMG…DDIEKCLEKK (133 aa)) enclose the B12-binding domain. An adenosylcob(III)alamin-binding site is contributed by H627.

The protein belongs to the methylmalonyl-CoA mutase family. In terms of assembly, homodimer. Interacts (the apoenzyme form) with MMAA; the interaction is GTP dependent. The cofactor is adenosylcob(III)alamin.

It is found in the mitochondrion matrix. The protein resides in the mitochondrion. It localises to the cytoplasm. The enzyme catalyses (R)-methylmalonyl-CoA = succinyl-CoA. Its activity is regulated as follows. Inhibited by itaconyl-CoA, a metabolite that inactivates the coenzyme B12 cofactor. Functionally, catalyzes the reversible isomerization of methylmalonyl-CoA (MMCoA) (generated from branched-chain amino acid metabolism and degradation of dietary odd chain fatty acids and cholesterol) to succinyl-CoA (3-carboxypropionyl-CoA), a key intermediate of the tricarboxylic acid cycle. The polypeptide is Methylmalonyl-CoA mutase, mitochondrial (MMUT) (Pongo abelii (Sumatran orangutan)).